A 396-amino-acid polypeptide reads, in one-letter code: Phosphoglycerate kinase (396 aa).

Residues 23–25, Arg-38, 61–64, Arg-122, and Arg-155 contribute to the substrate site; these read DFN and HMGK. Residues Lys-206, Gly-296, Glu-327, and 353–356 contribute to the ATP site; that span reads GGDS.

This sequence belongs to the phosphoglycerate kinase family. In terms of assembly, monomer.

The protein localises to the cytoplasm. It carries out the reaction (2R)-3-phosphoglycerate + ATP = (2R)-3-phospho-glyceroyl phosphate + ADP. It functions in the pathway carbohydrate degradation; glycolysis; pyruvate from D-glyceraldehyde 3-phosphate: step 2/5. This chain is Phosphoglycerate kinase, found in Clostridium botulinum (strain Alaska E43 / Type E3).